The primary structure comprises 299 residues: Apolipoprotein E (299 aa).

The signal sequence occupies residues 1–18 (MKVLCTVLVVTLLAGCQA). Positions 74–245 (VLMEDTMKAV…RLEEVREQME (172 aa)) are 8 X 22 AA approximate tandem repeats. 8 repeat units span residues 75 to 95 (LMED…QELV), 96 to 117 (PMAE…ARLG), 118 to 139 (ADME…AMLG), 140 to 161 (QSAE…KKLL), 162 to 183 (RDAE…EGAE), 184 to 206 (RSVS…RAAL), 207 to 225 (TSQP…LRGR), and 224 to 242 (GRLE…EVRE). Methionine 137 carries the methionine sulfoxide modification. Residue serine 141 is modified to Phosphoserine. The tract at residues 152-162 (HLRKLRKKLLR) is LDL and other lipoprotein receptors binding. Heparin is bound at residue 156-159 (LRKK). The tract at residues 205–273 (ALTSQPLQER…GWFEPMVEDM (69 aa)) is lipid-binding and lipoprotein association. 219–226 (GKRLRGRL) is a binding site for heparin. The interval 261–273 (RLKGWFEPMVEDM) is specificity for association with VLDL.

The protein belongs to the apolipoprotein A1/A4/E family. In terms of assembly, homotetramer. May interact with ABCA1; functionally associated with ABCA1 in the biogenesis of HDLs. May interact with APP/A4 amyloid-beta peptide; the interaction is extremely stable in vitro but its physiological significance is unclear. May interact with MAPT. May interact with MAP2. In the cerebrospinal fluid, interacts with secreted SORL1. Interacts with PMEL; this allows the loading of PMEL luminal fragment on ILVs to induce fibril nucleation. In terms of processing, APOE exists as multiple glycosylated and sialylated glycoforms within cells and in plasma. The extent of glycosylation and sialylation are tissue and context specific. Glycated in plasma VLDL. Post-translationally, phosphorylated by FAM20C in the extracellular medium.

It is found in the secreted. Its subcellular location is the extracellular space. The protein localises to the extracellular matrix. It localises to the extracellular vesicle. The protein resides in the endosome. It is found in the multivesicular body. Functionally, APOE is an apolipoprotein, a protein associating with lipid particles, that mainly functions in lipoprotein-mediated lipid transport between organs via the plasma and interstitial fluids. APOE is a core component of plasma lipoproteins and is involved in their production, conversion and clearance. Apolipoproteins are amphipathic molecules that interact both with lipids of the lipoprotein particle core and the aqueous environment of the plasma. As such, APOE associates with chylomicrons, chylomicron remnants, very low density lipoproteins (VLDL) and intermediate density lipoproteins (IDL) but shows a preferential binding to high-density lipoproteins (HDL). It also binds a wide range of cellular receptors including the LDL receptor/LDLR, the LDL receptor-related proteins LRP1, LRP2 and LRP8 and the very low-density lipoprotein receptor/VLDLR that mediate the cellular uptake of the APOE-containing lipoprotein particles. Finally, APOE also has a heparin-binding activity and binds heparan-sulfate proteoglycans on the surface of cells, a property that supports the capture and the receptor-mediated uptake of APOE-containing lipoproteins by cells. A main function of APOE is to mediate lipoprotein clearance through the uptake of chylomicrons, VLDLs, and HDLs by hepatocytes. APOE is also involved in the biosynthesis by the liver of VLDLs as well as their uptake by peripheral tissues ensuring the delivery of triglycerides and energy storage in muscle, heart and adipose tissues. By participating in the lipoprotein-mediated distribution of lipids among tissues, APOE plays a critical role in plasma and tissues lipid homeostasis. APOE is also involved in two steps of reverse cholesterol transport, the HDLs-mediated transport of cholesterol from peripheral tissues to the liver, and thereby plays an important role in cholesterol homeostasis. First, it is functionally associated with ABCA1 in the biogenesis of HDLs in tissues. Second, it is enriched in circulating HDLs and mediates their uptake by hepatocytes. APOE also plays an important role in lipid transport in the central nervous system, regulating neuron survival and sprouting. This chain is Apolipoprotein E (APOE), found in Ctenomys sociabilis (Social tuco-tuco).